Here is a 439-residue protein sequence, read N- to C-terminus: tRNA modification GTPase MnmE (439 aa).

(6S)-5-formyl-5,6,7,8-tetrahydrofolate is bound by residues Arg24, Glu81, and Lys121. The region spanning 218–363 (GFKVVIAGAP…LRDLIGRVVK (146 aa)) is the TrmE-type G domain. Asn228 serves as a coordination point for K(+). Residues 228–233 (NAGKSS), 247–253 (TDIAGTT), and 272–275 (DTAG) each bind GTP. Ser232 serves as a coordination point for Mg(2+). K(+)-binding residues include Thr247, Ile249, and Thr252. Thr253 serves as a coordination point for Mg(2+). Lys439 serves as a coordination point for (6S)-5-formyl-5,6,7,8-tetrahydrofolate.

Belongs to the TRAFAC class TrmE-Era-EngA-EngB-Septin-like GTPase superfamily. TrmE GTPase family. As to quaternary structure, homodimer. Heterotetramer of two MnmE and two MnmG subunits. It depends on K(+) as a cofactor.

The protein localises to the cytoplasm. Exhibits a very high intrinsic GTPase hydrolysis rate. Involved in the addition of a carboxymethylaminomethyl (cmnm) group at the wobble position (U34) of certain tRNAs, forming tRNA-cmnm(5)s(2)U34. This Rhizobium etli (strain CIAT 652) protein is tRNA modification GTPase MnmE.